Reading from the N-terminus, the 107-residue chain is Phosphoribosyl-ATP pyrophosphatase (107 aa).

Belongs to the PRA-PH family.

The protein localises to the cytoplasm. It carries out the reaction 1-(5-phospho-beta-D-ribosyl)-ATP + H2O = 1-(5-phospho-beta-D-ribosyl)-5'-AMP + diphosphate + H(+). Its pathway is amino-acid biosynthesis; L-histidine biosynthesis; L-histidine from 5-phospho-alpha-D-ribose 1-diphosphate: step 2/9. The protein is Phosphoribosyl-ATP pyrophosphatase of Azoarcus sp. (strain BH72).